An 88-amino-acid chain; its full sequence is uncharacterized protein (88 aa).

Belongs to the phD/YefM antitoxin family.

This is an uncharacterized protein from Sinorhizobium fredii (strain NBRC 101917 / NGR234).